The sequence spans 391 residues: Xylose isomerase (391 aa).

Active-site residues include His-54 and Asp-57. Mg(2+) contacts are provided by Glu-181, Glu-217, His-220, Asp-245, Asp-255, Asp-257, and Asp-287.

The protein belongs to the xylose isomerase family. Homotetramer. Mg(2+) is required as a cofactor.

Its subcellular location is the cytoplasm. The enzyme catalyses alpha-D-xylose = alpha-D-xylulofuranose. Involved in D-xylose catabolism. This Streptomyces albus G protein is Xylose isomerase (xylA).